The primary structure comprises 202 residues: MHDDPQQLELLRVARIGRAQGLKGEVTVRLYTDDPEWRFEPDSVLYSQDGETEYIVEGSRTFKDRWILKLEGVDDRNAAEALNGVELYGEVDDAEDMLEADEWYPKDLIGLEARLVEGNGLGLPAGQVVGKVVDVVDSPAQSLLKIRLTEPVVTGQNSKGEDVVEKTALVPFVEALVPDIDLEEQYLTLDPPGGLIPGCGMI.

Positions 100–195 constitute a PRC barrel domain; it reads ADEWYPKDLI…YLTLDPPGGL (96 aa).

It belongs to the RimM family. Binds ribosomal protein uS19.

The protein localises to the cytoplasm. Its function is as follows. An accessory protein needed during the final step in the assembly of 30S ribosomal subunit, possibly for assembly of the head region. Essential for efficient processing of 16S rRNA. May be needed both before and after RbfA during the maturation of 16S rRNA. It has affinity for free ribosomal 30S subunits but not for 70S ribosomes. This chain is Ribosome maturation factor RimM, found in Bifidobacterium longum (strain NCC 2705).